Here is a 335-residue protein sequence, read N- to C-terminus: Glycerol-3-phosphate dehydrogenase [NAD(P)+] (335 aa).

4 residues coordinate NADPH: Ser-10, Phe-11, Arg-31, and Lys-105. 3 residues coordinate sn-glycerol 3-phosphate: Lys-105, Gly-136, and Ser-138. An NADPH-binding site is contributed by Ala-140. Lys-191, Asp-244, Ser-254, Arg-255, and Asn-256 together coordinate sn-glycerol 3-phosphate. Residue Lys-191 is the Proton acceptor of the active site. NADPH is bound at residue Arg-255. Residues Val-279 and Glu-281 each coordinate NADPH.

Belongs to the NAD-dependent glycerol-3-phosphate dehydrogenase family.

Its subcellular location is the cytoplasm. It catalyses the reaction sn-glycerol 3-phosphate + NAD(+) = dihydroxyacetone phosphate + NADH + H(+). The catalysed reaction is sn-glycerol 3-phosphate + NADP(+) = dihydroxyacetone phosphate + NADPH + H(+). It functions in the pathway membrane lipid metabolism; glycerophospholipid metabolism. Functionally, catalyzes the reduction of the glycolytic intermediate dihydroxyacetone phosphate (DHAP) to sn-glycerol 3-phosphate (G3P), the key precursor for phospholipid synthesis. This chain is Glycerol-3-phosphate dehydrogenase [NAD(P)+], found in Leptospira borgpetersenii serovar Hardjo-bovis (strain L550).